The chain runs to 378 residues: Packaging protein 3 (378 aa).

Disordered stretches follow at residues 1–73 (MHPV…EGPV) and 355–378 (SRPP…DDFI). The interval 1-178 (MHPVLQSVRN…AFGEELRNTC (178 aa)) is interaction with packaging protein 1. Low complexity-rich tracts occupy residues 16–35 (GGPH…SVRR) and 49–58 (PGAGATPTAG). Ser-362 bears the Phosphoserine; by host mark. Residues 363–378 (FADEGPSESDDEDDFI) show a composition bias toward acidic residues.

The protein belongs to the adenoviridae packaging protein 3 family. Part of the genome packaging complex composed of packaging proteins 1, 2 and 3; this complex specifically binds to the packaging sequence on the left end of viral genomic DNA and performs packaging of the viral genome. Interacts with hexon-linking protein IIIa; this interaction is required to promote correct genome packaging. In terms of processing, cleaved at different sites by the viral protease during virion maturation.

It is found in the host nucleus. Functionally, involved in viral genome packaging through its interaction with packaging proteins 1 and 2. After proteolytic cleavage by adenovirus protease, L1 52/55k protein is removed from the capsid during viral maturation. This chain is Packaging protein 3, found in Galliformes (FAdV-1).